The following is a 329-amino-acid chain: Diaminopimelate epimerase (329 aa).

Substrate is bound by residues asparagine 14 and asparagine 73. Cysteine 82 (proton donor) is an active-site residue. Substrate is bound by residues 83 to 84 (GN), asparagine 170, asparagine 206, and 224 to 225 (ER). Cysteine 233 functions as the Proton acceptor in the catalytic mechanism. 234-235 (GT) contributes to the substrate binding site.

Belongs to the diaminopimelate epimerase family. In terms of assembly, homodimer.

The protein localises to the cytoplasm. The enzyme catalyses (2S,6S)-2,6-diaminopimelate = meso-2,6-diaminopimelate. Its pathway is amino-acid biosynthesis; L-lysine biosynthesis via DAP pathway; DL-2,6-diaminopimelate from LL-2,6-diaminopimelate: step 1/1. Catalyzes the stereoinversion of LL-2,6-diaminopimelate (L,L-DAP) to meso-diaminopimelate (meso-DAP), a precursor of L-lysine and an essential component of the bacterial peptidoglycan. The polypeptide is Diaminopimelate epimerase (Listeria monocytogenes serovar 1/2a (strain ATCC BAA-679 / EGD-e)).